We begin with the raw amino-acid sequence, 337 residues long: 5-formaminoimidazole-4-carboxamide-1-(beta)-D-ribofuranosyl 5'-monophosphate synthetase (337 aa).

Residues His14 and Ser74 each contribute to the 5-amino-1-(5-phospho-beta-D-ribosyl)imidazole-4-carboxamide site. In terms of domain architecture, ATP-grasp spans 81–328 (VELVERMKVP…IAREIRLAIE (248 aa)). ATP is bound by residues 125-185 (PDDI…VPVY) and Glu207. 5-amino-1-(5-phospho-beta-D-ribosyl)imidazole-4-carboxamide is bound at residue Asn235. Positions 273 and 286 each coordinate Mg(2+).

The protein belongs to the phosphohexose mutase family. Mg(2+) is required as a cofactor. It depends on Mn(2+) as a cofactor.

It catalyses the reaction 5-amino-1-(5-phospho-beta-D-ribosyl)imidazole-4-carboxamide + formate + ATP = 5-formamido-1-(5-phospho-D-ribosyl)imidazole-4-carboxamide + ADP + phosphate. It functions in the pathway purine metabolism; IMP biosynthesis via de novo pathway; 5-formamido-1-(5-phospho-D-ribosyl)imidazole-4-carboxamide from 5-amino-1-(5-phospho-D-ribosyl)imidazole-4-carboxamide (formate route): step 1/1. Functionally, catalyzes the ATP- and formate-dependent formylation of 5-aminoimidazole-4-carboxamide-1-beta-d-ribofuranosyl 5'-monophosphate (AICAR) to 5-formaminoimidazole-4-carboxamide-1-beta-d-ribofuranosyl 5'-monophosphate (FAICAR) in the absence of folates. In Pyrococcus abyssi (strain GE5 / Orsay), this protein is 5-formaminoimidazole-4-carboxamide-1-(beta)-D-ribofuranosyl 5'-monophosphate synthetase.